The sequence spans 288 residues: ATP synthase gamma chain (288 aa).

This sequence belongs to the ATPase gamma chain family. F-type ATPases have 2 components, CF(1) - the catalytic core - and CF(0) - the membrane proton channel. CF(1) has five subunits: alpha(3), beta(3), gamma(1), delta(1), epsilon(1). CF(0) has three main subunits: a, b and c.

It is found in the cell membrane. In terms of biological role, produces ATP from ADP in the presence of a proton gradient across the membrane. The gamma chain is believed to be important in regulating ATPase activity and the flow of protons through the CF(0) complex. In Staphylococcus aureus (strain bovine RF122 / ET3-1), this protein is ATP synthase gamma chain.